A 257-amino-acid polypeptide reads, in one-letter code: Ribonuclease PH (257 aa).

Phosphate is bound by residues Arg87 and 125 to 127; that span reads GTR.

It belongs to the RNase PH family. In terms of assembly, homohexameric ring arranged as a trimer of dimers.

The catalysed reaction is tRNA(n+1) + phosphate = tRNA(n) + a ribonucleoside 5'-diphosphate. Its function is as follows. Phosphorolytic 3'-5' exoribonuclease that plays an important role in tRNA 3'-end maturation. Removes nucleotide residues following the 3'-CCA terminus of tRNAs; can also add nucleotides to the ends of RNA molecules by using nucleoside diphosphates as substrates, but this may not be physiologically important. Probably plays a role in initiation of 16S rRNA degradation (leading to ribosome degradation) during starvation. The protein is Ribonuclease PH of Geobacillus kaustophilus (strain HTA426).